The primary structure comprises 302 residues: Large ribosomal subunit protein uL4m (302 aa).

This sequence belongs to the universal ribosomal protein uL4 family. In terms of assembly, component of the mitochondrial ribosome large subunit (39S) which comprises a 16S rRNA and about 50 distinct proteins.

The protein resides in the mitochondrion. This chain is Large ribosomal subunit protein uL4m (mrpl4), found in Danio rerio (Zebrafish).